Consider the following 211-residue polypeptide: Large ribosomal subunit protein uL3 (211 aa).

Q150 bears the N5-methylglutamine mark.

The protein belongs to the universal ribosomal protein uL3 family. Part of the 50S ribosomal subunit. Forms a cluster with proteins L14 and L19. Methylated by PrmB.

In terms of biological role, one of the primary rRNA binding proteins, it binds directly near the 3'-end of the 23S rRNA, where it nucleates assembly of the 50S subunit. This Pseudomonas savastanoi pv. phaseolicola (strain 1448A / Race 6) (Pseudomonas syringae pv. phaseolicola (strain 1448A / Race 6)) protein is Large ribosomal subunit protein uL3.